Here is a 373-residue protein sequence, read N- to C-terminus: Spermidine/putrescine import ATP-binding protein PotA (373 aa).

The 231-residue stretch at 8-238 (FELRGVSKYF…PANLYVARFV (231 aa)) folds into the ABC transporter domain. 40-47 (GPSGCGKT) provides a ligand contact to ATP.

This sequence belongs to the ABC transporter superfamily. Spermidine/putrescine importer (TC 3.A.1.11.1) family. As to quaternary structure, the complex is composed of two ATP-binding proteins (PotA), two transmembrane proteins (PotB and PotC) and a solute-binding protein (PotD).

Its subcellular location is the cell inner membrane. The enzyme catalyses ATP + H2O + polyamine-[polyamine-binding protein]Side 1 = ADP + phosphate + polyamineSide 2 + [polyamine-binding protein]Side 1.. In terms of biological role, part of the ABC transporter complex PotABCD involved in spermidine/putrescine import. Responsible for energy coupling to the transport system. The sequence is that of Spermidine/putrescine import ATP-binding protein PotA from Oleidesulfovibrio alaskensis (strain ATCC BAA-1058 / DSM 17464 / G20) (Desulfovibrio alaskensis).